A 60-amino-acid polypeptide reads, in one-letter code: Metallothionein (60 aa).

Met-1 carries the post-translational modification N-acetylmethionine. Residues 1-28 (MDPCECSKTGTCNCGGSCTCKNCSCTTC) form a beta region. A divalent metal cation-binding residues include Cys-4, Cys-6, Cys-12, Cys-14, Cys-18, Cys-20, Cys-23, Cys-25, Cys-28, Cys-32, Cys-33, Cys-35, Cys-36, Cys-40, Cys-43, Cys-47, Cys-49, Cys-54, Cys-58, and Cys-59. The interval 29-60 (NKSCCPCCPSGCPKCASGCVCKGKTCDTSCCQ) is alpha.

Belongs to the metallothionein superfamily. Type 1 family.

Metallothioneins have a high content of cysteine residues that bind various heavy metals. The protein is Metallothionein (mt) of Pleuronectes platessa (European plaice).